Reading from the N-terminus, the 971-residue chain is MDTDLYDEFGNYIGPELDSDEDDDELGRETKDLDEDEDEDEDDVGEHEDDHPGMEVVLHEDKKYYPTAEEVYGPEVETIVQEEDTQPLTEPIIKPVKTKKFTLMEQTLPVTVYEMDFLADLMDNSELIRNVTLCGHLHHGKTCFVDCLIEQTHPEIRKRYDQDLCYTDILFTEQERGVGIKSTPVTVVLPDTKGKSYLFNIMDTPGHVNFSDEVTAGLRISDGVVLFIDAAEGVMLNTERLIKHAVQERLAVTVCINKIDRLILELKLPPTDAYYKLRHIVDEVNGLISMYSTDENLILSPLLGNVCFSSSQYSICFTLGSFAKIYADTFGDINYQEFAKRLWGDIYFNPKTRKFTKKAPSSSSQRSFVEFILEPLYKILAQVVGDVDTSLPRTLDELGIHLTKEELKLNIRPLLRLVCKKFFGEFTGFVDMCVQHIPSPKVGAKPKIEHTYTGGVDSDLGEAMSDCDPDGPLMCHTTKMYSTDDGVQFHAFGRVLSGTIHAGQPVKVLGENYTLEDEEDSQICTVGRLWISVARYHIEVNRVPAGNWVLIEGVDQPIVKTATITEPRGNEEAQIFRPLKFNTTSVIKIAVEPVNPSELPKMLDGLRKVNKSYPSLTTKVEESGEHVILGTGELYLDCVMHDLRKMYSEIDIKVADPVVTFCETVVETSSLKCFAETPNKKNKITMIAEPLEKGLAEDIENEVVQITWNRKKLGEFFQTKYDWDLLAARSIWAFGPDATGPNILVDDTLPSEVDKALLGSVKDSIVQGFQWGTREGPLCDELIRNVKFKILDAVVAQEPLHRGGGQIIPTARRVVYSAFLMATPRLMEPYYFVEVQAPADCVSAVYTVLARRRGHVTQDAPIPGSPLYTIKAFIPAIDSFGFETDLRTHTQGQAFSLSVFHHWQIVPGDPLDKSIVIRPLEPQPAPHLAREFMIKTRRRKGLSEDVSISKFFDDPMLLELAKQDVVLNYPM.

Met-1 is modified (N-acetylmethionine). Residues 1-52 (MDTDLYDEFGNYIGPELDSDEDDDELGRETKDLDEDEDEDEDDVGEHEDDHP) are disordered. A compositionally biased stretch (acidic residues) spans 17 to 47 (LDSDEDDDELGRETKDLDEDEDEDEDDVGEH). Ser-19 carries the post-translational modification Phosphoserine. Residue Lys-63 forms a Glycyl lysine isopeptide (Lys-Gly) (interchain with G-Cter in SUMO1); alternate linkage. Lys-63 participates in a covalent cross-link: Glycyl lysine isopeptide (Lys-Gly) (interchain with G-Cter in SUMO2); alternate. A Phosphothreonine modification is found at Thr-85. The tr-type G domain occupies 126-408 (ELIRNVTLCG…GIHLTKEELK (283 aa)). GTP-binding positions include 135-142 (GHLHHGKT), 203-207 (DTPGH), and 257-260 (NKID).

This sequence belongs to the TRAFAC class translation factor GTPase superfamily. Classic translation factor GTPase family. EF-G/EF-2 subfamily. As to quaternary structure, component of the U5 snRNP and the U4/U6-U5 tri-snRNP complex, a building block of the spliceosome. The U4/U6-U5 tri-snRNP complex is composed of the U4, U6 and U5 snRNAs and at least PRPF3, PRPF4, PRPF6, PRPF8, PRPF31, SNRNP200, TXNL4A, SNRNP40, DDX23, CD2BP2, PPIH, SNU13, EFTUD2, SART1 and USP39. Component of the pre-catalytic, catalytic and post-catalytic spliceosome complexes. Component of the minor spliceosome, which splices U12-type introns. Within this complex, interacts with CRIPT. Interacts with ERBB4 and PRPF8. Interacts with PIH1D1. Interacts with RPAP3 and URI1 in a ZNHIT2-dependent manner. Interacts with NRDE2. Interacts with FAM50A. Interacts with UBL5.

It localises to the nucleus. In terms of biological role, required for pre-mRNA splicing as component of the spliceosome, including pre-catalytic, catalytic and post-catalytic spliceosomal complexes. Component of the U5 snRNP and the U4/U6-U5 tri-snRNP complex, a building block of the spliceosome. As a component of the minor spliceosome, involved in the splicing of U12-type introns in pre-mRNAs. In Mus musculus (Mouse), this protein is 116 kDa U5 small nuclear ribonucleoprotein component (Eftud2).